A 99-amino-acid chain; its full sequence is C-C motif chemokine 17 (99 aa).

The first 23 residues, methionine 1–alanine 23, serve as a signal peptide directing secretion. 2 cysteine pairs are disulfide-bonded: cysteine 33–cysteine 57 and cysteine 34–cysteine 73.

This sequence belongs to the intercrine beta (chemokine CC) family. As to expression, expressed in thymus, spleen, lymph node, lung and heart.

It is found in the secreted. Its function is as follows. Chemokine, which displays chemotactic activity for T lymphocytes, preferentially Th2 cells, but not monocytes or granulocytes. Therefore plays an important role in a wide range of inflammatory and immunological processes. Acts by binding to CCR4 at T-cell surface. Mediates GM-CSF/CSF2-driven pain and inflammation. In the brain, required to maintain the typical, highly branched morphology of hippocampal microglia under homeostatic conditions. May be important for the appropriate adaptation of microglial morphology and synaptic plasticity to acute lipopolysaccharide (LPS)-induced neuroinflammation. Plays a role in wound healing, mainly by inducing fibroblast migration into the wound. The protein is C-C motif chemokine 17 (CCL17) of Canis lupus familiaris (Dog).